A 427-amino-acid chain; its full sequence is GTPase Obg (427 aa).

The Obg domain occupies 1 to 158; it reads MFVDIAKIYV…LWVILELKVL (158 aa). In terms of domain architecture, OBG-type G spans 159–330; the sequence is ADVGLIGYPN…VLKRAYELLK (172 aa). GTP is bound by residues 165–172, 190–194, 212–215, 282–285, and 311–313; these read GYPNVGKS, FTTKY, DIPG, NKMD, and SAA. Positions 172 and 192 each coordinate Mg(2+). The OCT domain occupies 347–427; it reads FVYYKKKDVK…ILDVEFEYYE (81 aa).

It belongs to the TRAFAC class OBG-HflX-like GTPase superfamily. OBG GTPase family. Monomer. The cofactor is Mg(2+).

The protein resides in the cytoplasm. Functionally, an essential GTPase which binds GTP, GDP and possibly (p)ppGpp with moderate affinity, with high nucleotide exchange rates and a fairly low GTP hydrolysis rate. Plays a role in control of the cell cycle, stress response, ribosome biogenesis and in those bacteria that undergo differentiation, in morphogenesis control. The protein is GTPase Obg of Caldicellulosiruptor bescii (strain ATCC BAA-1888 / DSM 6725 / KCTC 15123 / Z-1320) (Anaerocellum thermophilum).